The following is a 504-amino-acid chain: Glucose-6-phosphate isomerase (504 aa).

The active-site Proton donor is Glu-333. Residues His-364 and Lys-473 contribute to the active site.

It belongs to the GPI family.

It localises to the cytoplasm. The enzyme catalyses alpha-D-glucose 6-phosphate = beta-D-fructose 6-phosphate. Its pathway is carbohydrate biosynthesis; gluconeogenesis. It participates in carbohydrate degradation; glycolysis; D-glyceraldehyde 3-phosphate and glycerone phosphate from D-glucose: step 2/4. In terms of biological role, catalyzes the reversible isomerization of glucose-6-phosphate to fructose-6-phosphate. The protein is Glucose-6-phosphate isomerase of Stenotrophomonas maltophilia (strain K279a).